The sequence spans 369 residues: 4-hydroxy-3-methylbut-2-en-1-yl diphosphate synthase (flavodoxin) (369 aa).

C270, C273, C305, and E312 together coordinate [4Fe-4S] cluster.

The protein belongs to the IspG family. The cofactor is [4Fe-4S] cluster.

It carries out the reaction (2E)-4-hydroxy-3-methylbut-2-enyl diphosphate + oxidized [flavodoxin] + H2O + 2 H(+) = 2-C-methyl-D-erythritol 2,4-cyclic diphosphate + reduced [flavodoxin]. Its pathway is isoprenoid biosynthesis; isopentenyl diphosphate biosynthesis via DXP pathway; isopentenyl diphosphate from 1-deoxy-D-xylulose 5-phosphate: step 5/6. In terms of biological role, converts 2C-methyl-D-erythritol 2,4-cyclodiphosphate (ME-2,4cPP) into 1-hydroxy-2-methyl-2-(E)-butenyl 4-diphosphate. The protein is 4-hydroxy-3-methylbut-2-en-1-yl diphosphate synthase (flavodoxin) of Pseudomonas savastanoi pv. phaseolicola (strain 1448A / Race 6) (Pseudomonas syringae pv. phaseolicola (strain 1448A / Race 6)).